A 178-amino-acid chain; its full sequence is Signaling threshold-regulating transmembrane adapter 1 (178 aa).

Residues Met-1 to Trp-23 are Extracellular-facing. Asn-6 is a glycosylation site (N-linked (GlcNAc...) asparagine). A helical; Signal-anchor for type III membrane protein membrane pass occupies residues Gly-24–Leu-44. At Ser-45–Ser-178 the chain is on the cytoplasmic side. Ser-62 and Ser-65 each carry phosphoserine. Tyr-72 is subject to Phosphotyrosine. Positions Tyr-72–Leu-75 are interaction with GRB2. The interval Gly-81–Gly-102 is disordered. Phosphoserine is present on residues Ser-84, Ser-87, and Ser-89. Tyr-109 is subject to Phosphotyrosine. Thr-126 carries the post-translational modification Phosphothreonine. The interval Ile-128 to Val-133 is interaction with PTPN11. Tyr-130 and Tyr-151 each carry phosphotyrosine. The tract at residues Tyr-151–Val-154 is interaction with CSK. At Ser-164 the chain carries Phosphoserine. Phosphotyrosine is present on Tyr-170. The interaction with GRB2 stretch occupies residues Tyr-170–Ser-173.

Homodimer; disulfide-linked. When phosphorylated, interacts with PTPN11/SHP2, GRB2 and CSK. Phosphorylated on tyrosines upon TCR activation; which promotes recruitment of PTPN11, GRB2 and CSK. As to expression, lymph node, spleen and thymus.

The protein resides in the cell membrane. Functionally, negatively regulates T-cell antigen receptor (TCR)-mediated signaling. Involved in positive selection of T-cells. The sequence is that of Signaling threshold-regulating transmembrane adapter 1 (Sit1) from Rattus norvegicus (Rat).